The following is a 357-amino-acid chain: MKWGFRWYGAAGDAIPLKHIRQIPGITGVVGTLLNKLPGDVWTVAEIQALKQSVEQEGLALLGIESVAIHDAIKAGTDQRDHYIDNYRQTLRNLGKCGISLVCYSFKPIFGWAKTDLAYENEDGSLSLLFDQAVVENMQPEDMYQLIHSQSKGFRLPGWEEERLQQFQELKAMYAGVTEEDLVENLRYFLERVIPVCEEENIKMGIHPDDPPWEIFGLPRITKNLADLKRILSLVDSPANGITFCTGSLGADPTNDLPTMIREIGHRINFVHFRNVKYLGEHRFEETAHPSVAGSLDMAELMQALVDVGYEGVIRPDHGRAIWDEKAMPGYGLYDRAMGLTYIQGLYEATKAKQNRK.

Belongs to the mannonate dehydratase family. Requires Fe(2+) as cofactor. Mn(2+) serves as cofactor.

It catalyses the reaction D-mannonate = 2-dehydro-3-deoxy-D-gluconate + H2O. It participates in carbohydrate metabolism; pentose and glucuronate interconversion. In terms of biological role, catalyzes the dehydration of D-mannonate. This chain is Mannonate dehydratase, found in Enterococcus faecalis (strain ATCC 700802 / V583).